Consider the following 66-residue polypeptide: DNA-directed RNA polymerase subunit Rpo10 (66 aa).

Zn(2+) is bound by residues cysteine 7, cysteine 10, cysteine 47, and cysteine 48.

This sequence belongs to the archaeal Rpo10/eukaryotic RPB10 RNA polymerase subunit family. As to quaternary structure, part of the RNA polymerase complex. The cofactor is Zn(2+).

It localises to the cytoplasm. The catalysed reaction is RNA(n) + a ribonucleoside 5'-triphosphate = RNA(n+1) + diphosphate. Functionally, DNA-dependent RNA polymerase (RNAP) catalyzes the transcription of DNA into RNA using the four ribonucleoside triphosphates as substrates. The protein is DNA-directed RNA polymerase subunit Rpo10 of Haloarcula marismortui (strain ATCC 43049 / DSM 3752 / JCM 8966 / VKM B-1809) (Halobacterium marismortui).